The chain runs to 569 residues: Proline--tRNA ligase (569 aa).

Belongs to the class-II aminoacyl-tRNA synthetase family. ProS type 1 subfamily. In terms of assembly, homodimer.

Its subcellular location is the cytoplasm. It catalyses the reaction tRNA(Pro) + L-proline + ATP = L-prolyl-tRNA(Pro) + AMP + diphosphate. Functionally, catalyzes the attachment of proline to tRNA(Pro) in a two-step reaction: proline is first activated by ATP to form Pro-AMP and then transferred to the acceptor end of tRNA(Pro). As ProRS can inadvertently accommodate and process non-cognate amino acids such as alanine and cysteine, to avoid such errors it has two additional distinct editing activities against alanine. One activity is designated as 'pretransfer' editing and involves the tRNA(Pro)-independent hydrolysis of activated Ala-AMP. The other activity is designated 'posttransfer' editing and involves deacylation of mischarged Ala-tRNA(Pro). The misacylated Cys-tRNA(Pro) is not edited by ProRS. This Halalkalibacterium halodurans (strain ATCC BAA-125 / DSM 18197 / FERM 7344 / JCM 9153 / C-125) (Bacillus halodurans) protein is Proline--tRNA ligase.